The primary structure comprises 342 residues: SWR1-complex protein 5 (342 aa).

3 disordered regions span residues 1-126 (MAPT…PVTI), 142-178 (PRTS…DPDS), and 214-238 (LGEN…RMPR). 2 stretches are compositionally biased toward acidic residues: residues 8–20 (LAED…DSDF) and 33–43 (ISDDDDEEAGE). Positions 78–87 (GEKRQKKTKT) are enriched in basic residues. Residues 260–341 (NLSMASRLQA…RRARMAQAGK (82 aa)) enclose the BCNT-C domain.

Belongs to the SWC5 family. As to quaternary structure, component of the SWR1 chromatin remodeling complex.

Its subcellular location is the nucleus. Its function is as follows. Component of the SWR1 complex which mediates the ATP-dependent exchange of histone H2A for the H2A variant H2A.Z leading to transcriptional regulation of selected genes by chromatin remodeling. Involved in chromosome stability. This is SWR1-complex protein 5 (crc-2) from Neurospora crassa (strain ATCC 24698 / 74-OR23-1A / CBS 708.71 / DSM 1257 / FGSC 987).